The chain runs to 347 residues: Gas vesicle ATPase GvpN1 (347 aa).

Residues 1–11 show a composition bias toward basic residues; sequence MTNESRKRKVR. A disordered region spans residues 1–64; the sequence is MTNESRKRKV…EGFVPEEQSF (64 aa). Basic and acidic residues predominate over residues 18–55; the sequence is SRGDKKQGRSQSRDDKEIERLERQNDARGQESSTHVDE. 91-98 lines the ATP pocket; it reads GPTGCGKT.

The protein belongs to the CbbQ/NirQ/NorQ/GpvN family. As to quaternary structure, forms homodimers, forms a GvpN1-GvpO1 heterodimer, interacts with GvpC1 (via the latter's C-terminus) and GvpL, might interact with GvpA1.

The protein resides in the gas vesicle. It is found in the cytoplasm. The catalysed reaction is ATP + H2O = ADP + phosphate + H(+). In terms of biological role, an ATPase that functions in gas vesicle formation. A minor component of the gas vesicle, also found in soluble extracts. Probably enhances gas vesicle formation. Gas vesicles are hollow, gas filled proteinaceous nanostructures found in several microbial planktonic microorganisms. They allow positioning of halobacteria at the optimal depth for growth in the poorly aerated, shallow brine pools of their habitat. Expression of a 9.5 kb p-vac DNA fragment containing 2 divergently transcribed regions (gvpD-gvpE-gvpF-gvpG-gvpH-gvpI-gvpJ-gvpK-gvpL-gvpM and gvpA-gvpC-gvpN-gvpO) allows H.volcanii to produce gas vesicles. A similar region restores gas vesicle production in H.halobium without the p-vac locus, but which still have the c-vac locus. In Halobacterium salinarum (strain ATCC 700922 / JCM 11081 / NRC-1) (Halobacterium halobium), this protein is Gas vesicle ATPase GvpN1 (gvpN11).